Consider the following 111-residue polypeptide: Nucleoid-associated protein PputW619_3586 (111 aa).

The interval 87-111 (EQSSQEKMGGMTAGMQLPPGFKMPF) is disordered.

The protein belongs to the YbaB/EbfC family. As to quaternary structure, homodimer.

It is found in the cytoplasm. The protein resides in the nucleoid. In terms of biological role, binds to DNA and alters its conformation. May be involved in regulation of gene expression, nucleoid organization and DNA protection. The protein is Nucleoid-associated protein PputW619_3586 of Pseudomonas putida (strain W619).